Consider the following 504-residue polypeptide: Endochitinase (504 aa).

A signal peptide spans 1 to 22; the sequence is MNRTTLILFFIILSNTITVIHG. The 370-residue stretch at 23–392 folds into the GH18 domain; sequence YVRGCYYTNW…NAISSELEGE (370 aa). The cysteines at positions 27 and 52 are disulfide-linked. Chitin-binding positions include 78-79 and 105-108; these read TE and GGYN. Residue Glu148 is the Proton donor of the active site. Residues Tyr149, 212-215, and Trp362 contribute to the chitin site; that span reads MSYD. Residues 389-450 form a disordered region; sequence LEGESENPEI…YDTDETEGQE (62 aa). The span at 396–408 shows a compositional bias: low complexity; that stretch reads PEITTEEPSITET. Repeat copies occupy residues 407–420 and 421–434. The interval 407 to 448 is 3 X 14 AA approximate tandem repeats of E-T-E-A-Y-[ED]-T-D-E-T-E-E-T-S; sequence ETEAYETDETEETSETEAYDTDETEETSETEATTYDTDETEG. Acidic residues predominate over residues 409 to 435; the sequence is EAYETDETEETSETEAYDTDETEETSE. The stretch at 435–448 is one 3; approximate repeat; sequence ETEATTYDTDETEG. The Chitin-binding type-2 domain maps to 448-504; the sequence is GQECPERDGLFPHPTDCHLFIQCANNIAYVMQCPATTFFNDAIKVCDHMTNAPDTCI. Cysteines 480 and 493 form a disulfide.

Belongs to the glycosyl hydrolase 18 family. Chitinase class II subfamily. Post-translationally, O-glycosylated.

It carries out the reaction Random endo-hydrolysis of N-acetyl-beta-D-glucosaminide (1-&gt;4)-beta-linkages in chitin and chitodextrins.. In terms of biological role, microfilarial chitinase, which may function to degrade chitin-containing structures in the micro-filaria or in its mosquito vector during parasite development and transmission. This chain is Endochitinase, found in Brugia malayi (Filarial nematode worm).